The sequence spans 428 residues: Keratin, type I cytoskeletal 18-A (428 aa).

A head region spans residues 2-78; that stretch reads SFRSQTSSTT…SVKGSGLFNN (77 aa). Positions 79–114 are coil 1A; that stretch reads EKETMQILNDRLASYLETVRNLEQANSKLELQIRET. Residues 79 to 390 enclose the IF rod domain; the sequence is EKETMQILND…RLLDGEDFRL (312 aa). The tract at residues 115–131 is linker 1; the sequence is LEKRGPTTQDYSAYEKV. Positions 132 to 223 are coil 1B; that stretch reads VEDLKSQIYD…RSHQTDVEEL (92 aa). The interval 224–247 is linker 12; sequence RKHISECGVQVDVDAPKGQDLSKI. The segment at 248–385 is coil 2; sequence MEEIRAQYET…IATYRRLLDG (138 aa). The segment at 386–428 is tail; the sequence is EDFRLQDALAVQTTKVQKKITVTETVVDGKVVSQSSEVQEIKK.

It belongs to the intermediate filament family. As to quaternary structure, heterotetramer of two type I and two type II keratins. Keratin-18 associates with keratin-8. In terms of processing, phosphorylated. Proteolytically cleaved by caspases during epithelial cell apoptosis.

Its function is as follows. When phosphorylated, plays a role in filament reorganization. The protein is Keratin, type I cytoskeletal 18-A of Polypterus senegalus (Senegal bichir).